We begin with the raw amino-acid sequence, 90 residues long: UPF0367 protein Ava_2513 (90 aa).

The protein belongs to the UPF0367 family.

This is UPF0367 protein Ava_2513 from Trichormus variabilis (strain ATCC 29413 / PCC 7937) (Anabaena variabilis).